The following is a 454-amino-acid chain: Zinc finger CCCH domain-containing protein 66 (454 aa).

Residues 1–23 are compositionally biased toward gly residues; that stretch reads MAAGAGAGGGGGEGDSNGGGTSP. The tract at residues 1–30 is disordered; it reads MAAGAGAGGGGGEGDSNGGGTSPGGVSAAA. 5 consecutive C3H1-type zinc fingers follow at residues 66-94, 111-139, 157-185, 318-346, and 364-392; these read RIGEPDCSYYMRTGLCRFGMTCKFNHPPN, RVGQPECQYYLKTGTCKFGATCKFHHPRE, RPNEKECAYYLRTGQCKFASTCKFHHPQP, RPDQPECQFYMKTGDCKFGAVCKFHHPKE, and RPGEPVCTFYSRYGICKFGPNCKFDHPMG. The segment at 405-454 is disordered; sequence DVSSMHYQLSPSPGHPGILLDGGSGRSHRVPQSDSQQIPSGDGNAEREAS. Polar residues predominate over residues 434 to 443; sequence VPQSDSQQIP.

The chain is Zinc finger CCCH domain-containing protein 66 from Oryza sativa subsp. japonica (Rice).